A 515-amino-acid chain; its full sequence is 2-isopropylmalate synthase (515 aa).

A Pyruvate carboxyltransferase domain is found at 4 to 266; that stretch reads IKFFDTTLRD…ETRLNLQEIK (263 aa). The Mn(2+) site is built by aspartate 13, histidine 201, histidine 203, and asparagine 237. Positions 391–515 are regulatory domain; that stretch reads QLSSIQVQYG…RAENEKVTTP (125 aa).

This sequence belongs to the alpha-IPM synthase/homocitrate synthase family. LeuA type 1 subfamily. Homodimer. Requires Mn(2+) as cofactor.

The protein resides in the cytoplasm. It catalyses the reaction 3-methyl-2-oxobutanoate + acetyl-CoA + H2O = (2S)-2-isopropylmalate + CoA + H(+). It participates in amino-acid biosynthesis; L-leucine biosynthesis; L-leucine from 3-methyl-2-oxobutanoate: step 1/4. In terms of biological role, catalyzes the condensation of the acetyl group of acetyl-CoA with 3-methyl-2-oxobutanoate (2-ketoisovalerate) to form 3-carboxy-3-hydroxy-4-methylpentanoate (2-isopropylmalate). The polypeptide is 2-isopropylmalate synthase (Geobacillus thermodenitrificans (strain NG80-2)).